The following is a 407-amino-acid chain: (R)-phenyllactyl-CoA dehydratase alpha subunit (407 aa).

A propeptide spanning residues 1 to 4 (MSDR) is cleaved from the precursor.

This sequence belongs to the FldB/FldC dehydratase alpha/beta subunit family. As to quaternary structure, part of the heterotrimeric phenyllactate dehydratase complex FldABC, composed of (R)-phenyllactate CoA-transferase (FldA) and a heterodimeric (R)-phenyllactyl-CoA dehydratase (FldB and FldC). [4Fe-4S] cluster is required as a cofactor. No flavin could be detected in the FldABC complex, and the addition of FAD, FMN or riboflavin to the dehydratase do not increase enzymatic activity. serves as cofactor.

The enzyme catalyses (R)-3-phenyllactoyl-CoA = (E)-cinnamoyl-CoA + H2O. It carries out the reaction (R)-3-(4-hydroxyphenyl)lactoyl-CoA = (E)-4-coumaroyl-CoA + H2O. It catalyses the reaction (R)-3-(indol-3-yl)lactoyl-CoA = (E)-3-(indol-3-yl)acryloyl-CoA + H2O. The protein operates within amino-acid degradation; L-phenylalanine degradation. Component of the phenyllactate dehydratase complex FldABC that is involved in the fermentation of L-phenylalanine via a Stickland reaction. This complex catalyzes the reversible syn-dehydration of (R)-phenyllactate to (E)-cinnamate in two steps, a CoA-transfer from cinnamoyl-CoA to phenyllactate, catalyzed by FldA, followed by the dehydration of phenyllactyl-CoA to cinnamoyl-CoA, catalyzed by FldB and FldC. Requires the activator FldI to initiate catalysis. This is (R)-phenyllactyl-CoA dehydratase alpha subunit from Clostridium sporogenes.